A 352-amino-acid chain; its full sequence is Large ribosomal subunit protein uL5m (352 aa).

The interval Ser28–Asp109 is disordered. Residues Glu63–Ala80 show a composition bias toward basic and acidic residues.

Belongs to the universal ribosomal protein uL5 family. Component of the mitochondrial large ribosomal subunit (mt-LSU). Mature N.crassa 74S mitochondrial ribosomes consist of a small (37S) and a large (54S) subunit. The 37S small subunit contains a 16S ribosomal RNA (16S mt-rRNA) and 32 different proteins. The 54S large subunit contains a 23S rRNA (23S mt-rRNA) and 42 different proteins. Unlike bacterial L5, uL5m does not bind zinc.

The protein resides in the mitochondrion. Component of the mitochondrial ribosome (mitoribosome), a dedicated translation machinery responsible for the synthesis of mitochondrial genome-encoded proteins, including at least some of the essential transmembrane subunits of the mitochondrial respiratory chain. The mitoribosomes are attached to the mitochondrial inner membrane and translation products are cotranslationally integrated into the membrane. In Neurospora crassa (strain ATCC 24698 / 74-OR23-1A / CBS 708.71 / DSM 1257 / FGSC 987), this protein is Large ribosomal subunit protein uL5m (mrpl7).